Consider the following 474-residue polypeptide: ATP synthase subunit beta (474 aa).

152–159 (GGAGVGKT) contributes to the ATP binding site.

It belongs to the ATPase alpha/beta chains family. F-type ATPases have 2 components, CF(1) - the catalytic core - and CF(0) - the membrane proton channel. CF(1) has five subunits: alpha(3), beta(3), gamma(1), delta(1), epsilon(1). CF(0) has three main subunits: a(1), b(2) and c(9-12). The alpha and beta chains form an alternating ring which encloses part of the gamma chain. CF(1) is attached to CF(0) by a central stalk formed by the gamma and epsilon chains, while a peripheral stalk is formed by the delta and b chains.

The protein localises to the cell inner membrane. It carries out the reaction ATP + H2O + 4 H(+)(in) = ADP + phosphate + 5 H(+)(out). Functionally, produces ATP from ADP in the presence of a proton gradient across the membrane. The catalytic sites are hosted primarily by the beta subunits. The protein is ATP synthase subunit beta of Paramagnetospirillum magneticum (strain ATCC 700264 / AMB-1) (Magnetospirillum magneticum).